The chain runs to 716 residues: Protein C-mannosyl-transferase DPY19L3 (716 aa).

Over 1-43 the chain is Cytoplasmic; the sequence is MMSIRQRREIRATEVSEDFPAQEENVKLENKLPSGCTSRRLWK. Residues 44–64 form a helical membrane-spanning segment; sequence ILSLTIGGTIALCIGLLTSVY. The Lumenal portion of the chain corresponds to 65-154; it reads LATLHENDLW…RVLPIQKYLE (90 aa). Asn-118 is a glycosylation site (N-linked (GlcNAc...) asparagine). Residues 155–182 form a helical membrane-spanning segment; the sequence is PVYFYIYTLFGLQAIYVTALYITSWLLS. Topologically, residues 183 to 184 are cytoplasmic; sequence GT. An intramembrane region (name=3) is located at residues 185–197; that stretch reads WLSGLLAAFWYVT. The Cytoplasmic segment spans residues 198–215; it reads NRIDTTRVEFTIPLRENW. The name=4 intramembrane region spans 216–230; sequence ALPFFAIQIAAITYF. Topologically, residues 231–239 are cytoplasmic; that stretch reads LRPNLQPLS. A helical transmembrane segment spans residues 240–256; sequence ERLTLLAIFISTFLFSL. Residues 257 to 262 lie on the Lumenal side of the membrane; the sequence is TWQFNQ. A helical transmembrane segment spans residues 263 to 279; sequence FMMLMQALVLFTLDSLD. Residues 280–289 are Cytoplasmic-facing; sequence MLPAVKATWL. A helical transmembrane segment spans residues 290 to 306; sequence YGIQITSLLLVCILQFF. The Lumenal portion of the chain corresponds to 307–308; the sequence is NS. A helical membrane pass occupies residues 309–323; that stretch reads MILGSLLISFNLSVF. The Cytoplasmic portion of the chain corresponds to 324 to 338; the sequence is IARKLQKNLKTGSFL. The helical transmembrane segment at 339–359 threads the bilayer; sequence NRLGKLLLHLFMVLCLTLFLN. Residues 360 to 414 lie on the Lumenal side of the membrane; it reads NIIKKILNLKSDEHIFKFLKAKFGLGATRDFDANLYLCEEAFGLLPFNTFGRLSD. A helical transmembrane segment spans residues 415 to 437; that stretch reads TLLFYAYIFVLSITVIVAFVVAF. Over 438–465 the chain is Cytoplasmic; it reads HNLSDSTNQQSVGKMEKGTVDLKPETAY. The chain crosses the membrane as a helical span at residues 466 to 485; sequence NLIHTILFGFLALSTMRMKY. At 486–487 the chain is on the lumenal side; it reads LW. A helical transmembrane segment spans residues 488-499; that stretch reads TSHMCVFASFGL. The Cytoplasmic portion of the chain corresponds to 500-522; sequence CSPEIWELLLKSVHLYNPKRICI. The chain crosses the membrane as a helical span at residues 523 to 539; the sequence is MRYSVPILILLYLCYKF. Over 540 to 716 the chain is Lumenal; that stretch reads WPGMMDELSE…FHVYKLSRNK (177 aa). Asn-704 carries an N-linked (GlcNAc...) asparagine glycan.

This sequence belongs to the dpy-19 family. In terms of tissue distribution, widely expressed.

Its subcellular location is the endoplasmic reticulum membrane. It carries out the reaction L-tryptophyl-[protein] + a di-trans,poly-cis-dolichyl beta-D-mannosyl phosphate = C-alpha-D-mannosyl-L-tryptophyl-[protein] + a di-trans,poly-cis-dolichyl phosphate + H(+). It participates in protein modification; protein glycosylation. Functionally, C-mannosyltransferase that mediates C-mannosylation of tryptophan residues on target proteins. The reaction occurs on the luminal side of the endoplasmic reticulum and involves the transfer of a mannose unit from a dolichylphosphate mannose (Dol-P-Man) donor to an acceptor protein containing a WxxW or WxxC consensus sequence. C-mannosylates RSPO1, a Wnt signaling regulator, preferentially at the first Trp residue in the sequence WxxW. C-mannosylates the netrin receptor UNC5A, preferentially at the third tryptophan of WxxWxxWxxC sequence. Has no C-mannosyltransferase activity. The protein is Protein C-mannosyl-transferase DPY19L3 (DPY19L3) of Homo sapiens (Human).